A 505-amino-acid polypeptide reads, in one-letter code: AMP phosphorylase (505 aa).

Residues G170, S196–S201, and T205 contribute to the AMP site. Catalysis depends on D258, which acts as the Proton donor. Residues S266 and K290 each coordinate AMP.

The protein belongs to the thymidine/pyrimidine-nucleoside phosphorylase family. Type 2 subfamily.

It carries out the reaction AMP + phosphate = alpha-D-ribose 1,5-bisphosphate + adenine. It catalyses the reaction CMP + phosphate = cytosine + alpha-D-ribose 1,5-bisphosphate. The catalysed reaction is UMP + phosphate = alpha-D-ribose 1,5-bisphosphate + uracil. Catalyzes the conversion of AMP and phosphate to adenine and ribose 1,5-bisphosphate (R15P). Exhibits phosphorylase activity toward CMP and UMP in addition to AMP. Functions in an archaeal AMP degradation pathway, together with R15P isomerase and RubisCO. This chain is AMP phosphorylase, found in Methanococcus maripaludis (strain C7 / ATCC BAA-1331).